Here is a 542-residue protein sequence, read N- to C-terminus: Membrane protein insertase YidC (542 aa).

A helical transmembrane segment spans residues 5-25 (TLLAVILSITVFYVFSLLFAP). Residues 33–64 (ESTGQAVSAPVSAGQPVAGGVQPSASAPSLPA) form a disordered region. A compositionally biased stretch (low complexity) spans 54 to 64 (QPSASAPSLPA). A run of 5 helical transmembrane segments spans residues 323-343 (LDLG…KYFY), 345-365 (YVGN…ALFF), 419-439 (LPML…MFSI), 463-483 (MLGL…TMFI), and 500-520 (MLAL…GLVL).

It belongs to the OXA1/ALB3/YidC family. Type 1 subfamily. Interacts with the Sec translocase complex via SecD. Specifically interacts with transmembrane segments of nascent integral membrane proteins during membrane integration.

The protein resides in the cell inner membrane. Required for the insertion and/or proper folding and/or complex formation of integral membrane proteins into the membrane. Involved in integration of membrane proteins that insert both dependently and independently of the Sec translocase complex, as well as at least some lipoproteins. Aids folding of multispanning membrane proteins. The chain is Membrane protein insertase YidC from Pelobacter propionicus (strain DSM 2379 / NBRC 103807 / OttBd1).